The sequence spans 273 residues: Glutamate racemase (273 aa).

Substrate-binding positions include 17 to 18 (DS) and 49 to 50 (YG). C80 serves as the catalytic Proton donor/acceptor. Substrate is bound at residue 81–82 (NT). Catalysis depends on C190, which acts as the Proton donor/acceptor. 191-192 (TH) lines the substrate pocket.

It belongs to the aspartate/glutamate racemases family.

It catalyses the reaction L-glutamate = D-glutamate. Its pathway is cell wall biogenesis; peptidoglycan biosynthesis. Provides the (R)-glutamate required for cell wall biosynthesis. The polypeptide is Glutamate racemase (Corynebacterium glutamicum (strain ATCC 13032 / DSM 20300 / JCM 1318 / BCRC 11384 / CCUG 27702 / LMG 3730 / NBRC 12168 / NCIMB 10025 / NRRL B-2784 / 534)).